We begin with the raw amino-acid sequence, 161 residues long: Transcription antitermination protein NusB (161 aa).

The protein belongs to the NusB family.

Involved in transcription antitermination. Required for transcription of ribosomal RNA (rRNA) genes. Binds specifically to the boxA antiterminator sequence of the ribosomal RNA (rrn) operons. The sequence is that of Transcription antitermination protein NusB from Syntrophus aciditrophicus (strain SB).